We begin with the raw amino-acid sequence, 308 residues long: ADP-L-glycero-D-manno-heptose-6-epimerase (308 aa).

Residues 10–11, 31–32, Lys-38, Lys-53, 75–79, and Asn-92 each bind NADP(+); these read MI, DN, and EGACS. Tyr-140 serves as the catalytic Proton acceptor. Lys-144 contacts NADP(+). Residue Asn-169 participates in substrate binding. 2 residues coordinate NADP(+): Val-170 and Lys-178. The active-site Proton acceptor is Lys-178. Substrate-binding positions include Ser-180, His-187, 201–204, Arg-209, and Tyr-272; that span reads FEGS.

It belongs to the NAD(P)-dependent epimerase/dehydratase family. HldD subfamily. Homopentamer. NADP(+) is required as a cofactor.

It catalyses the reaction ADP-D-glycero-beta-D-manno-heptose = ADP-L-glycero-beta-D-manno-heptose. The protein operates within nucleotide-sugar biosynthesis; ADP-L-glycero-beta-D-manno-heptose biosynthesis; ADP-L-glycero-beta-D-manno-heptose from D-glycero-beta-D-manno-heptose 7-phosphate: step 4/4. Its function is as follows. Catalyzes the interconversion between ADP-D-glycero-beta-D-manno-heptose and ADP-L-glycero-beta-D-manno-heptose via an epimerization at carbon 6 of the heptose. This Actinobacillus pleuropneumoniae serotype 5b (strain L20) protein is ADP-L-glycero-D-manno-heptose-6-epimerase.